The sequence spans 428 residues: Maltoporin 1 (428 aa).

Residues 1 to 25 form the signal peptide; that stretch reads MTMKVKLLTTSVALALSMTAFSSNA.

Belongs to the porin LamB (TC 1.B.3) family. As to quaternary structure, homotrimer formed of three 18-stranded antiparallel beta-barrels, containing three independent channels.

It is found in the cell outer membrane. The enzyme catalyses beta-maltose(in) = beta-maltose(out). Functionally, involved in the transport of maltose and maltodextrins. The protein is Maltoporin 1 of Aeromonas salmonicida (strain A449).